A 133-amino-acid polypeptide reads, in one-letter code: Large ribosomal subunit protein uL15 (133 aa).

Positions 1–64 are disordered; sequence MGLENLKPAK…QPLQRRLPKI (64 aa).

It belongs to the universal ribosomal protein uL15 family. In terms of assembly, part of the 50S ribosomal subunit.

Its function is as follows. Binds to the 23S rRNA. The sequence is that of Large ribosomal subunit protein uL15 from Helicobacter pylori (strain G27).